We begin with the raw amino-acid sequence, 470 residues long: Annexin C1 (470 aa).

The tract at residues 1 to 143 (MYGQQNNYGA…QGQSPMMYLG (143 aa)) is disordered. Over residues 15-34 (QWGQAPPQGYQPGYQNGPPA) the composition is skewed to low complexity. Residues 82–92 (PQPPFGAPSPA) are compositionally biased toward pro residues. Low complexity-rich tracts occupy residues 93 to 110 (PAGY…YGAP) and 128 to 138 (GYGSQPQGQSP). Annexin repeat units follow at residues 161 to 232 (YDAR…LLSL), 233 to 304 (GPLG…MALS), 316 to 388 (QLVQ…FIAR), and 395 to 468 (DGVV…GIIE).

It belongs to the annexin family.

Its function is as follows. Does not appear to play a major role in virulence. May play a role in titan cell formation. The chain is Annexin C1 from Cryptococcus neoformans var. grubii serotype A (strain H99 / ATCC 208821 / CBS 10515 / FGSC 9487) (Filobasidiella neoformans var. grubii).